Here is a 265-residue protein sequence, read N- to C-terminus: Anamorsin homolog 1 (265 aa).

Residues 1–143 (MAATVAEALA…KVSWSLGSSF (143 aa)) form an N-terminal SAM-like domain region. The segment at 144-175 (PLKKATKGLPKIQIDDDSELIDEDSLLTEDDL) is linker. Residues cysteine 186, cysteine 195, cysteine 198, and cysteine 200 each contribute to the [2Fe-2S] cluster site. Residues 186–200 (CEVGATRKACKNCTC) form a fe-S binding site A region. Positions 226, 229, 237, and 240 each coordinate [4Fe-4S] cluster. 2 consecutive short sequence motifs (cx2C motif) follow at residues 226 to 229 (CGNC) and 237 to 240 (CGTC). Residues 226–240 (CGNCGLGDAFRCGTC) form a fe-S binding site B region.

This sequence belongs to the anamorsin family. As to quaternary structure, monomer. [2Fe-2S] cluster serves as cofactor. The cofactor is [4Fe-4S] cluster.

The protein resides in the cytoplasm. It localises to the mitochondrion intermembrane space. Its function is as follows. Component of the cytosolic iron-sulfur (Fe-S) protein assembly (CIA) machinery. Required for the maturation of extramitochondrial Fe-S proteins. Part of an electron transfer chain functioning in an early step of cytosolic Fe-S biogenesis, facilitating the de novo assembly of a [4Fe-4S] cluster on the cytosolic Fe-S scaffold complex. Electrons are transferred from NADPH via a FAD- and FMN-containing diflavin oxidoreductase. Together with the diflavin oxidoreductase, also required for the assembly of the diferric tyrosyl radical cofactor of ribonucleotide reductase (RNR), probably by providing electrons for reduction during radical cofactor maturation in the catalytic small subunit. The polypeptide is Anamorsin homolog 1 (Oryza sativa subsp. japonica (Rice)).